Reading from the N-terminus, the 283-residue chain is Glutamate racemase (283 aa).

Substrate-binding positions include aspartate 28 to serine 29 and tyrosine 60 to glycine 61. Residue cysteine 92 is the Proton donor/acceptor of the active site. Asparagine 93–threonine 94 contributes to the substrate binding site. Catalysis depends on cysteine 204, which acts as the Proton donor/acceptor. Threonine 205–histidine 206 contributes to the substrate binding site.

It belongs to the aspartate/glutamate racemases family.

The enzyme catalyses L-glutamate = D-glutamate. It participates in cell wall biogenesis; peptidoglycan biosynthesis. In terms of biological role, provides the (R)-glutamate required for cell wall biosynthesis. The sequence is that of Glutamate racemase from Salmonella gallinarum (strain 287/91 / NCTC 13346).